The sequence spans 558 residues: uncharacterized protein (558 aa).

Residues 531-558 (NEDDGTSASPTAMTFDMPPEHPFYSHYR) are disordered.

This is an uncharacterized protein from Saccharomyces cerevisiae (strain ATCC 204508 / S288c) (Baker's yeast).